Reading from the N-terminus, the 129-residue chain is Large ribosomal subunit protein bL12 (129 aa).

This sequence belongs to the bacterial ribosomal protein bL12 family. As to quaternary structure, homodimer. Part of the ribosomal stalk of the 50S ribosomal subunit. Forms a multimeric L10(L12)X complex, where L10 forms an elongated spine to which 2 to 4 L12 dimers bind in a sequential fashion. Binds GTP-bound translation factors.

Its function is as follows. Forms part of the ribosomal stalk which helps the ribosome interact with GTP-bound translation factors. Is thus essential for accurate translation. The chain is Large ribosomal subunit protein bL12 from Micrococcus luteus (strain ATCC 4698 / DSM 20030 / JCM 1464 / CCM 169 / CCUG 5858 / IAM 1056 / NBRC 3333 / NCIMB 9278 / NCTC 2665 / VKM Ac-2230) (Micrococcus lysodeikticus).